A 280-amino-acid polypeptide reads, in one-letter code: MLFLEGLMQYGFLQKALITSVTVGIVSGVIGSFIILRGMSLMGDAISHAVLPGVAISYMMGMNFFIGAATFGIAAALGIGFVNQKSRIKNDTAIGIVFSAFFALGIILISFAKSSTDLYHILFGNVLAVRSSDMWMTIIIAILVISLVAIFYKEFLVSSFDPVMAEAYGLNVRFLHYFLMLLLTLVTVSALQTVGIILVVAMLITPAATAYLLTNKLSKMIMLASTFGAVSAIIGLYFSYIFNLASGAAMVLVATIIFFIAFLFAPKQGLLFSKKKEVIE.

The next 9 membrane-spanning stretches (helical) occupy residues 16 to 36 (ALITSVTVGIVSGVIGSFIIL), 41 to 61 (LMGDAISHAVLPGVAISYMMG), 62 to 82 (MNFFIGAATFGIAAALGIGFV), 92 to 112 (TAIGIVFSAFFALGIILISFA), 137 to 157 (TIIIAILVISLVAIFYKEFLV), 168 to 188 (YGLNVRFLHYFLMLLLTLVTV), 193 to 213 (TVGIILVVAMLITPAATAYLL), 221 to 241 (IMLASTFGAVSAIIGLYFSYI), and 244 to 264 (LASGAAMVLVATIIFFIAFLF).

It belongs to the ABC-3 integral membrane protein family.

Its subcellular location is the cell membrane. Its function is as follows. This protein is probably a component of a manganese permease, a binding protein-dependent, ATP-driven transport system. The protein is Manganese transport system membrane protein MntC (mntC) of Listeria innocua serovar 6a (strain ATCC BAA-680 / CLIP 11262).